A 430-amino-acid chain; its full sequence is von Willebrand factor (430 aa).

Asn-6 carries an N-linked (GlcNAc...) asparagine glycan. Residues Cys-9 and Cys-12 are joined by a disulfide bond. O-linked (GalNAc...) threonine glycosylation is found at Thr-23, Thr-30, and Thr-31. A disulfide bridge links Cys-47 with Cys-233. The VWFA 1; binding site for platelet glycoprotein Ib domain maps to 52 to 228 (DLVFLLDGSY…DELEQRRDEI (177 aa)). Residue Thr-252 is glycosylated (O-linked (GalNAc...) threonine). O-linked (GalNAc...) serine glycosylation is present at Ser-261. Residues 273–430 (DVVFVLEASD…ITPIFIQDFE (158 aa)) enclose the VWFA 2 domain. N-linked (GlcNAc...) asparagine glycosylation is found at Asn-290 and Asn-349.

As to quaternary structure, multimeric. Interacts with F8. N- and O-glycosylated. In terms of tissue distribution, plasma.

The protein localises to the secreted. It is found in the extracellular space. Its subcellular location is the extracellular matrix. In terms of biological role, important in the maintenance of hemostasis, it promotes adhesion of platelets to the sites of vascular injury by forming a molecular bridge between sub-endothelial collagen matrix and platelet-surface receptor complex GPIb-IX-V. Also acts as a chaperone for coagulation factor VIII, delivering it to the site of injury, stabilizing its heterodimeric structure and protecting it from premature clearance from plasma. The sequence is that of von Willebrand factor from Rattus norvegicus (Rat).